The primary structure comprises 633 residues: Kelch repeat and BTB domain-containing protein 11 (633 aa).

Positions 1–118 (MENSVAPFVL…EDPPSRHEHA (118 aa)) are disordered. A compositionally biased stretch (polar residues) spans 35 to 60 (STAQTPCSLSASLCFSSGDDSPPQSR). Positions 61-73 (ASAAEGSEASPPS) are enriched in low complexity. A phosphoserine mark is found at serine 70, serine 73, serine 92, serine 95, serine 107, and serine 113. A BTB domain is found at 146–206 (PDLVIEVAGR…AYSGRMAGVR (61 aa)). 4 Kelch repeats span residues 317 to 365 (RPQS…VLFN), 366 to 418 (YLFL…ALDG), 419 to 463 (HLYA…TCNG), and 465 to 506 (IYVS…ALDG).

This chain is Kelch repeat and BTB domain-containing protein 11 (Kbtbd11), found in Mus musculus (Mouse).